A 472-amino-acid polypeptide reads, in one-letter code: Argininosuccinate lyase (472 aa).

This sequence belongs to the lyase 1 family. Argininosuccinate lyase subfamily.

It localises to the cytoplasm. The enzyme catalyses 2-(N(omega)-L-arginino)succinate = fumarate + L-arginine. It functions in the pathway amino-acid biosynthesis; L-arginine biosynthesis; L-arginine from L-ornithine and carbamoyl phosphate: step 3/3. The sequence is that of Argininosuccinate lyase from Rhodococcus jostii (strain RHA1).